The following is a 208-amino-acid chain: NAD(P)H-quinone oxidoreductase subunit I (208 aa).

4Fe-4S ferredoxin-type domains follow at residues 55-84 (GRIH…VDWV) and 95-124 (RNYS…MTEE). 8 residues coordinate [4Fe-4S] cluster: C64, C67, C70, C74, C104, C107, C110, and C114.

It belongs to the complex I 23 kDa subunit family. As to quaternary structure, NDH-1 is composed of at least 11 different subunits. It depends on [4Fe-4S] cluster as a cofactor.

The protein localises to the cellular thylakoid membrane. It carries out the reaction a plastoquinone + NADH + (n+1) H(+)(in) = a plastoquinol + NAD(+) + n H(+)(out). The catalysed reaction is a plastoquinone + NADPH + (n+1) H(+)(in) = a plastoquinol + NADP(+) + n H(+)(out). NDH-1 shuttles electrons from an unknown electron donor, via FMN and iron-sulfur (Fe-S) centers, to quinones in the respiratory and/or the photosynthetic chain. The immediate electron acceptor for the enzyme in this species is believed to be plastoquinone. Couples the redox reaction to proton translocation, and thus conserves the redox energy in a proton gradient. The polypeptide is NAD(P)H-quinone oxidoreductase subunit I (Prochlorococcus marinus (strain AS9601)).